A 275-amino-acid chain; its full sequence is Large ribosomal subunit protein uL2 (275 aa).

2 disordered regions span residues 24–48 and 224–264; these read LTTDRPHKPLTKTKQRTGGRRNAGD and VMNP…NKRT. A compositionally biased stretch (basic residues) spans 31-42; it reads KPLTKTKQRTGG.

Belongs to the universal ribosomal protein uL2 family. Part of the 50S ribosomal subunit. Forms a bridge to the 30S subunit in the 70S ribosome.

One of the primary rRNA binding proteins. Required for association of the 30S and 50S subunits to form the 70S ribosome, for tRNA binding and peptide bond formation. It has been suggested to have peptidyltransferase activity; this is somewhat controversial. Makes several contacts with the 16S rRNA in the 70S ribosome. The sequence is that of Large ribosomal subunit protein uL2 from Koribacter versatilis (strain Ellin345).